A 207-amino-acid polypeptide reads, in one-letter code: Small ribosomal subunit protein uS4 (207 aa).

A disordered region spans residues Lys33–Asn54. The segment covering Gly42–Gly53 has biased composition (polar residues). Residues Ser97 to Ala157 enclose the S4 RNA-binding domain.

The protein belongs to the universal ribosomal protein uS4 family. As to quaternary structure, part of the 30S ribosomal subunit. Contacts protein S5. The interaction surface between S4 and S5 is involved in control of translational fidelity.

One of the primary rRNA binding proteins, it binds directly to 16S rRNA where it nucleates assembly of the body of the 30S subunit. Its function is as follows. With S5 and S12 plays an important role in translational accuracy. The sequence is that of Small ribosomal subunit protein uS4 from Ralstonia pickettii (strain 12J).